The primary structure comprises 241 residues: Uridylate kinase (241 aa).

An ATP-binding site is contributed by 9–10 (GS). Gly44 provides a ligand contact to UMP. Gly45 and Arg49 together coordinate ATP. UMP-binding positions include Asp66 and 114–120 (VTPGQTT). The ATP site is built by Thr140, Tyr146, and Asp149. The disordered stretch occupies residues 222–241 (TDVIPTGSEEPIYWTGSSDA).

This sequence belongs to the UMP kinase family. Homohexamer.

It localises to the cytoplasm. The enzyme catalyses UMP + ATP = UDP + ADP. The protein operates within pyrimidine metabolism; CTP biosynthesis via de novo pathway; UDP from UMP (UMPK route): step 1/1. Inhibited by UTP. Catalyzes the reversible phosphorylation of UMP to UDP. The protein is Uridylate kinase of Halorubrum lacusprofundi (strain ATCC 49239 / DSM 5036 / JCM 8891 / ACAM 34).